The chain runs to 127 residues: Cytochrome b-c1 complex subunit 7, mitochondrial (127 aa).

Belongs to the UQCRB/QCR7 family. In terms of assembly, component of the ubiquinol-cytochrome c oxidoreductase (cytochrome b-c1 complex, complex III, CIII), a multisubunit enzyme composed of 10 subunits. The complex is composed of 3 respiratory subunits cytochrome b (COB), cytochrome c1 (CYT1) and Rieske protein (RIP1), 2 core protein subunits COR1 and QCR2, and 5 low-molecular weight protein subunits QCR6, QCR7, QCR8, QCR9 and QCR10. The complex exists as an obligatory dimer and forms supercomplexes (SCs) in the inner mitochondrial membrane with a monomer or a dimer of cytochrome c oxidase (complex IV, CIV), resulting in 2 different assemblies (supercomplexes III(2)IV and III(2)IV(2)).

It localises to the mitochondrion inner membrane. Functionally, component of the ubiquinol-cytochrome c oxidoreductase, a multisubunit transmembrane complex that is part of the mitochondrial electron transport chain which drives oxidative phosphorylation. Plays an important role in the uptake of multiple carbon sources such acetate, lactate, amino acids or GlcNAc present in different host niches. This is Cytochrome b-c1 complex subunit 7, mitochondrial from Candida albicans (strain SC5314 / ATCC MYA-2876) (Yeast).